A 383-amino-acid chain; its full sequence is tRNA (adenine(58)-N(1))-methyltransferase catalytic subunit TRM61 (383 aa).

S-adenosyl-L-methionine contacts are provided by residues Val-94, 121–124 (SGSF), Glu-139, Arg-144, 168–169 (DV), and Asp-203. Ser-302 is subject to Phosphoserine.

It belongs to the class I-like SAM-binding methyltransferase superfamily. TRM61 family. Heterotetramer; composed of two copies of TRM6/GCD10 and two copies of TRM61/GCD14.

It localises to the nucleus. It catalyses the reaction adenosine(58) in tRNA + S-adenosyl-L-methionine = N(1)-methyladenosine(58) in tRNA + S-adenosyl-L-homocysteine + H(+). Its function is as follows. Catalytic subunit of tRNA (adenine-N(1)-)-methyltransferase, which catalyzes the formation of N(1)-methyladenine at position 58 (m1A58) in initiator methionyl-tRNA. GCD14 is also required for repression of GCN4 mRNA translation by the upstream open reading frames (uORFs) under conditions of amino acid sufficiency. This chain is tRNA (adenine(58)-N(1))-methyltransferase catalytic subunit TRM61 (GCD14), found in Saccharomyces cerevisiae (strain ATCC 204508 / S288c) (Baker's yeast).